Reading from the N-terminus, the 429-residue chain is MSNIVDTAIEAIVAREILDSRGRPTIEAEVHLLSGAVGLAQVPSGASTGTFEAHELRDKDKSRYGGKGVLKAVHNVNEVLAPKLIDLDAINQELIDRTMIALDGSGNKSNLGANAILAVSLAAARAGAASLGIPLYRYLGGPLANLLPVPLMNVINGGAHAANNVDFQEFMIVPVGATSFREALRWGAEVFATLSEVLHDKGLLTGVGDEGGFAPNLESNQVALELLVAAIEKAGYKPGEQVALALDVAASEFYKEGQYVYDGRPHAPTEFIDYLGQLVDQYPIVSIEDGLHEEDWQNWQLLTQKVGSRVQLVGDDLFVTNATRLQKGIQEKAGNAILIKLNQIGSLTETLETIDLGTRNGFRSVISHRSGETEDTTIADLAVATRAGQIKTGSLCRSERVAKYNRLLRIEDELGDRAVYAGAVGLGPK.

Residue Gln-168 coordinates (2R)-2-phosphoglycerate. Glu-210 serves as the catalytic Proton donor. Residues Asp-247, Glu-288, and Asp-315 each coordinate Mg(2+). 4 residues coordinate (2R)-2-phosphoglycerate: Lys-340, Arg-369, Ser-370, and Lys-391. The active-site Proton acceptor is the Lys-340.

This sequence belongs to the enolase family. Requires Mg(2+) as cofactor.

The protein resides in the cytoplasm. The protein localises to the secreted. Its subcellular location is the cell surface. The enzyme catalyses (2R)-2-phosphoglycerate = phosphoenolpyruvate + H2O. It participates in carbohydrate degradation; glycolysis; pyruvate from D-glyceraldehyde 3-phosphate: step 4/5. Functionally, catalyzes the reversible conversion of 2-phosphoglycerate (2-PG) into phosphoenolpyruvate (PEP). It is essential for the degradation of carbohydrates via glycolysis. The sequence is that of Enolase from Trichormus variabilis (strain ATCC 29413 / PCC 7937) (Anabaena variabilis).